Here is a 248-residue protein sequence, read N- to C-terminus: ATP synthase subunit a (248 aa).

6 consecutive transmembrane segments (helical) span residues Ile-25 to Met-45, Phe-83 to Ile-103, Leu-113 to Ala-133, Leu-142 to Ile-162, Phe-192 to Gly-212, and Ile-215 to Leu-235.

This sequence belongs to the ATPase A chain family. In terms of assembly, F-type ATPases have 2 components, CF(1) - the catalytic core - and CF(0) - the membrane proton channel. CF(1) has five subunits: alpha(3), beta(3), gamma(1), delta(1), epsilon(1). CF(0) has four main subunits: a, b, b' and c.

It localises to the cell inner membrane. Functionally, key component of the proton channel; it plays a direct role in the translocation of protons across the membrane. The polypeptide is ATP synthase subunit a (Rhodopseudomonas palustris (strain HaA2)).